The primary structure comprises 400 residues: Cytochrome P450 BJ-1 homolog (400 aa).

Heme is bound at residue Cys349.

This sequence belongs to the cytochrome P450 family. Heme is required as a cofactor.

Functionally, cytochromes P450 are a group of heme-thiolate monooxygenases. They oxidize a variety of structurally unrelated compounds, including steroids, fatty acids, and xenobiotics. This Sinorhizobium fredii (strain NBRC 101917 / NGR234) protein is Cytochrome P450 BJ-1 homolog (cyp112A2).